Consider the following 288-residue polypeptide: 4-hydroxy-tetrahydrodipicolinate synthase (288 aa).

Threonine 42 serves as a coordination point for pyruvate. The active-site Proton donor/acceptor is tyrosine 129. Lysine 157 functions as the Schiff-base intermediate with substrate in the catalytic mechanism. Position 198 (isoleucine 198) interacts with pyruvate.

This sequence belongs to the DapA family. As to quaternary structure, homotetramer; dimer of dimers.

The protein localises to the cytoplasm. It catalyses the reaction L-aspartate 4-semialdehyde + pyruvate = (2S,4S)-4-hydroxy-2,3,4,5-tetrahydrodipicolinate + H2O + H(+). The protein operates within amino-acid biosynthesis; L-lysine biosynthesis via DAP pathway; (S)-tetrahydrodipicolinate from L-aspartate: step 3/4. In terms of biological role, catalyzes the condensation of (S)-aspartate-beta-semialdehyde [(S)-ASA] and pyruvate to 4-hydroxy-tetrahydrodipicolinate (HTPA). The chain is 4-hydroxy-tetrahydrodipicolinate synthase from Chlamydia abortus (strain DSM 27085 / S26/3) (Chlamydophila abortus).